Here is a 710-residue protein sequence, read N- to C-terminus: Protein CNGC15a (710 aa).

6 helical membrane-spanning segments follow: residues 85 to 105 (IFLAACLISLFVDPLFFYLPV), 115 to 135 (SIGLEVSLTIIRTFVDAFYII), 174 to 194 (LWSDLVAALPLPQVLIWAVIP), 207 to 226 (VVRLVSIFQYLLRLYLIYPL), 248 to 268 (YLTLYMLASHVLGSTWYLLSI), and 368 to 388 (AEINFAVIVAILGLVLFALLI). Residue 474 to 559 (LFDQMDDRML…WALDPRPTAV (86 aa)) coordinates a nucleoside 3',5'-cyclic phosphate.

This sequence belongs to the cyclic nucleotide-gated cation channel (TC 1.A.1.5) family. In terms of assembly, interacts (via N-terminus) with DMI1 (via c-terminus). The Nod factor has no effect on this interaction, implying that the complex is maintained after activation. As to expression, expressed in roots, stems, leaves, flowers and pods.

The protein localises to the nucleus membrane. Its function is as follows. Cyclic nucleotide-gated channel involved in the establishment of both rhizobial and mycorrhizal associations. Required for full activation of nuclear-localized Ca(2+) oscillations by Nod and Myc factors. Simultaneous activation of the K(+)-permeable channel DMI1 and the Ca(2+) channel CNGC15 can give rise to sustained Ca(2+) oscillations. May function during fertilization in both female and male gametophytic Ca(2+) signaling. In Medicago truncatula (Barrel medic), this protein is Protein CNGC15a.